Consider the following 466-residue polypeptide: Glutamate decarboxylase alpha (466 aa).

Residues threonine 62 and asparagine 83 each coordinate substrate. Pyridoxal 5'-phosphate contacts are provided by residues 126–127 (SS), threonine 212, and histidine 275. Lysine 276 bears the N6-(pyridoxal phosphate)lysine mark.

This sequence belongs to the group II decarboxylase family. As to quaternary structure, homohexamer. Pyridoxal 5'-phosphate serves as cofactor.

The enzyme catalyses L-glutamate + H(+) = 4-aminobutanoate + CO2. Functionally, converts glutamate to gamma-aminobutyrate (GABA), consuming one intracellular proton in the reaction. The gad system helps to maintain a near-neutral intracellular pH when cells are exposed to extremely acidic conditions. The ability to survive transit through the acidic conditions of the stomach is essential for successful colonization of the mammalian host by commensal and pathogenic bacteria. This Escherichia coli O6:H1 (strain CFT073 / ATCC 700928 / UPEC) protein is Glutamate decarboxylase alpha (gadA).